The following is a 613-amino-acid chain: Transcription factor MTB1 (613 aa).

A JAZ-interaction domain region spans residues 48–130; sequence LQNKLSDLVE…RVLQKLHMLF (83 aa). Disordered regions lie at residues 256–285 and 391–441; these read EKNEGNNPRLSNSGAVTERTDGNPKIFGHD and AHNV…AERQ. Residues 260 to 270 are compositionally biased toward polar residues; sequence GNNPRLSNSGA. Basic and acidic residues-rich tracts occupy residues 394–417 and 427–441; these read VESEHSDVEASCKEDRAGPVDEKR and NGREEPLNHVEAERQ. Residues 430–443 are basic motif; degenerate; it reads EEPLNHVEAERQRR. Positions 430-479 constitute a bHLH domain; it reads EEPLNHVEAERQRREKLNQRFYALRAVVPNISKMDKASLLGDAIAYITEL. Positions 444 to 479 are helix-loop-helix motif; that stretch reads EKLNQRFYALRAVVPNISKMDKASLLGDAIAYITEL. Residues 490 to 513 are disordered; that stretch reads RELRLGSTSRDAITSEDSPSSEIQ. Residues 495-512 show a composition bias toward polar residues; the sequence is GSTSRDAITSEDSPSSEI.

Interacts with MYC2 (via N-terminus). MTB1 competes with MED25 for binding to MYC2. Interacts (via N-terminus) with JAZ7.

It localises to the nucleus. Transcription factor that negatively regulates jasmonate (JA) signaling. Negatively regulates JA-dependent response to wounding, JA-induced expression of defense genes, JA-dependent responses against herbivorous insects, and JA-dependent resistance against Botrytis cinerea infection. Plays a positive role in resistance against the bacterial pathogen Pseudomonas syringae pv tomato DC3000. The polypeptide is Transcription factor MTB1 (Solanum lycopersicum (Tomato)).